Here is a 152-residue protein sequence, read N- to C-terminus: MNSDEYIFNIKDILNILPHRYPFLLIDRILDFKAFQYLKALKNCTVNEPFFQGHFIKEPVFPGVLMIEAMSQAAAVLIFKSIGKLNINQLYYFVGIENTRFKKIVVPGDQIFIEVIYLKSKKNFIKFKIFAIVNKKNVCKSTIIFYKKNIFN.

H54 is an active-site residue.

This sequence belongs to the thioester dehydratase family. FabZ subfamily.

The protein localises to the cytoplasm. The catalysed reaction is a (3R)-hydroxyacyl-[ACP] = a (2E)-enoyl-[ACP] + H2O. Functionally, involved in unsaturated fatty acids biosynthesis. Catalyzes the dehydration of short chain beta-hydroxyacyl-ACPs and long chain saturated and unsaturated beta-hydroxyacyl-ACPs. The protein is 3-hydroxyacyl-[acyl-carrier-protein] dehydratase FabZ of Buchnera aphidicola subsp. Schizaphis graminum (strain Sg).